Consider the following 115-residue polypeptide: Non-specific lipid-transfer protein 4.2 (115 aa).

An N-terminal signal peptide occupies residues 1–25; that stretch reads MARAAATQLVLVAMVAAMLIVATDA. 4 cysteine pairs are disulfide-bonded: Cys29–Cys77, Cys39–Cys54, Cys55–Cys97, and Cys75–Cys111.

Belongs to the plant LTP family.

Functionally, plant non-specific lipid-transfer proteins transfer phospholipids as well as galactolipids across membranes. May play a role in wax or cutin deposition in the cell walls of expanding epidermal cells and certain secretory tissues. This chain is Non-specific lipid-transfer protein 4.2 (LTP4.2), found in Hordeum vulgare (Barley).